Consider the following 283-residue polypeptide: MQPTLAPAPHPSMQTSAQDHADQVLHDQLLAAHQHLSHPQQARPQGPTAQPPHMQPNTTSPRDQNNIDPAISGAAMLSGPPQTPPQPEPTGQESPKTYGKRPLSTSKRAAQNRAAQRAFRQRKESYIRKLEEQVKEFDNTNETMKQLQAENYQLREYIINLQSRLLDSQGEVPELPGNIDLNQPRNDISVPPPGAPAATGPAPGPGGAPQQMQVPNPGAATNEDMNSLNRIAVAGLGMRKHPNEEANFLGNNFQARRPRNDDGQPDGSEATKTEPGHGLPVVS.

A compositionally biased stretch (pro residues) spans 1-10 (MQPTLAPAPH). Residues 1 to 121 (MQPTLAPAPH…NRAAQRAFRQ (121 aa)) are disordered. Low complexity predominate over residues 26-42 (HDQLLAAHQHLSHPQQA). The span at 55-67 (QPNTTSPRDQNNI) shows a compositional bias: polar residues. The region spanning 102-165 (PLSTSKRAAQ…EYIINLQSRL (64 aa)) is the bZIP domain. Residues 103 to 126 (LSTSKRAAQNRAAQRAFRQRKESY) form a basic motif region. The span at 108–118 (RAAQNRAAQRA) shows a compositional bias: low complexity. A leucine-zipper region spans residues 130 to 161 (LEEQVKEFDNTNETMKQLQAENYQLREYIINL). The tract at residues 178-283 (NIDLNQPRND…EPGHGLPVVS (106 aa)) is disordered.

The protein belongs to the bZIP family.

The protein localises to the nucleus. Functionally, putative transcription factor. In Aspergillus niger (strain ATCC MYA-4892 / CBS 513.88 / FGSC A1513), this protein is Putative transcription factor kapC (kapC).